The primary structure comprises 284 residues: Malonyl-[acyl-carrier protein] O-methyltransferase (284 aa).

The protein belongs to the methyltransferase superfamily.

The catalysed reaction is malonyl-[ACP] + S-adenosyl-L-methionine = malonyl-[ACP] methyl ester + S-adenosyl-L-homocysteine. The protein operates within cofactor biosynthesis; biotin biosynthesis. Its function is as follows. Converts the free carboxyl group of a malonyl-thioester to its methyl ester by transfer of a methyl group from S-adenosyl-L-methionine (SAM). It allows to synthesize pimeloyl-ACP via the fatty acid synthetic pathway. The chain is Malonyl-[acyl-carrier protein] O-methyltransferase from Legionella pneumophila subsp. pneumophila (strain Philadelphia 1 / ATCC 33152 / DSM 7513).